The chain runs to 354 residues: UDP-3-O-acylglucosamine N-acyltransferase (354 aa).

The active-site Proton acceptor is the histidine 250.

It belongs to the transferase hexapeptide repeat family. LpxD subfamily. Homotrimer.

It carries out the reaction a UDP-3-O-[(3R)-3-hydroxyacyl]-alpha-D-glucosamine + a (3R)-hydroxyacyl-[ACP] = a UDP-2-N,3-O-bis[(3R)-3-hydroxyacyl]-alpha-D-glucosamine + holo-[ACP] + H(+). The protein operates within bacterial outer membrane biogenesis; LPS lipid A biosynthesis. In terms of biological role, catalyzes the N-acylation of UDP-3-O-acylglucosamine using 3-hydroxyacyl-ACP as the acyl donor. Is involved in the biosynthesis of lipid A, a phosphorylated glycolipid that anchors the lipopolysaccharide to the outer membrane of the cell. The protein is UDP-3-O-acylglucosamine N-acyltransferase of Methylococcus capsulatus (strain ATCC 33009 / NCIMB 11132 / Bath).